Consider the following 336-residue polypeptide: Phospho-N-acetylmuramoyl-pentapeptide-transferase (336 aa).

Helical transmembrane passes span 3 to 23 (LTLI…PYFI), 53 to 73 (GGTV…LFSI), 78 to 98 (SLAL…IGFL), 118 to 138 (LALQ…PSGI), 143 to 163 (VFGY…FWVV), 174 to 194 (GIDG…GVIA), 200 to 220 (FDVL…FCFN), 226 to 246 (VFMG…ISIA), 251 to 271 (WTLL…MLQV), and 316 to 336 (AFLW…LYVF).

The protein belongs to the glycosyltransferase 4 family. MraY subfamily. It depends on Mg(2+) as a cofactor.

It is found in the cell membrane. It catalyses the reaction UDP-N-acetyl-alpha-D-muramoyl-L-alanyl-gamma-D-glutamyl-L-lysyl-D-alanyl-D-alanine + di-trans,octa-cis-undecaprenyl phosphate = Mur2Ac(oyl-L-Ala-gamma-D-Glu-L-Lys-D-Ala-D-Ala)-di-trans,octa-cis-undecaprenyl diphosphate + UMP. It participates in cell wall biogenesis; peptidoglycan biosynthesis. In terms of biological role, catalyzes the initial step of the lipid cycle reactions in the biosynthesis of the cell wall peptidoglycan: transfers peptidoglycan precursor phospho-MurNAc-pentapeptide from UDP-MurNAc-pentapeptide onto the lipid carrier undecaprenyl phosphate, yielding undecaprenyl-pyrophosphoryl-MurNAc-pentapeptide, known as lipid I. The sequence is that of Phospho-N-acetylmuramoyl-pentapeptide-transferase from Streptococcus pyogenes serotype M5 (strain Manfredo).